Reading from the N-terminus, the 254-residue chain is Trans-aconitate 2-methyltransferase (254 aa).

The protein belongs to the methyltransferase superfamily. Tam family.

The protein resides in the cytoplasm. The catalysed reaction is trans-aconitate + S-adenosyl-L-methionine = (E)-3-(methoxycarbonyl)pent-2-enedioate + S-adenosyl-L-homocysteine. Catalyzes the S-adenosylmethionine monomethyl esterification of trans-aconitate. This is Trans-aconitate 2-methyltransferase from Rhodococcus jostii (strain RHA1).